Reading from the N-terminus, the 177-residue chain is ATP synthase subunit delta (177 aa).

Belongs to the ATPase delta chain family. In terms of assembly, F-type ATPases have 2 components, F(1) - the catalytic core - and F(0) - the membrane proton channel. F(1) has five subunits: alpha(3), beta(3), gamma(1), delta(1), epsilon(1). F(0) has three main subunits: a(1), b(2) and c(10-14). The alpha and beta chains form an alternating ring which encloses part of the gamma chain. F(1) is attached to F(0) by a central stalk formed by the gamma and epsilon chains, while a peripheral stalk is formed by the delta and b chains.

It is found in the cell inner membrane. Its function is as follows. F(1)F(0) ATP synthase produces ATP from ADP in the presence of a proton or sodium gradient. F-type ATPases consist of two structural domains, F(1) containing the extramembraneous catalytic core and F(0) containing the membrane proton channel, linked together by a central stalk and a peripheral stalk. During catalysis, ATP synthesis in the catalytic domain of F(1) is coupled via a rotary mechanism of the central stalk subunits to proton translocation. This protein is part of the stalk that links CF(0) to CF(1). It either transmits conformational changes from CF(0) to CF(1) or is implicated in proton conduction. The sequence is that of ATP synthase subunit delta from Flavobacterium psychrophilum (strain ATCC 49511 / DSM 21280 / CIP 103535 / JIP02/86).